We begin with the raw amino-acid sequence, 108 residues long: MDQLLDVETLKKLSPEQQEQVISGVKQQAALANAQNLVTDISEKCTNKCITAPGSSLASGEKQCLQRCMDRFMESWNLVSQTLQKRLQEEMASSGGMGGGFGQGPSFS.

The short motif at 45-68 (CTNKCITAPGSSLASGEKQCLQRC) is the Twin CX3C motif element. Cystine bridges form between Cys-45–Cys-68 and Cys-49–Cys-64. The interval 89 to 108 (EEMASSGGMGGGFGQGPSFS) is disordered. Over residues 95–108 (GGMGGGFGQGPSFS) the composition is skewed to gly residues.

Belongs to the small Tim family. Heterohexamer; composed of 3 copies of tim-8/ddp-1 and 3 copies of tin-13/tim-13, named soluble 70 kDa complex. Associates with the TIM22 complex, whose core is composed of tim-22.

Its subcellular location is the mitochondrion inner membrane. In terms of biological role, mitochondrial intermembrane chaperone that participates in the import and insertion of some multi-pass transmembrane proteins into the mitochondrial inner membrane. Also required for the transfer of beta-barrel precursors from the TOM complex to the sorting and assembly machinery (SAM complex) of the outer membrane. Acts as a chaperone-like protein that protects the hydrophobic precursors from aggregation and guide them through the mitochondrial intermembrane space. The tim-8-tim-13 complex mediates the import of some proteins while the predominant tim-9/tin-9.1-tim-10/tin-10 70 kDa complex mediates the import of much more proteins. The polypeptide is Mitochondrial import inner membrane translocase subunit tim-13 (tin-13) (Caenorhabditis elegans).